We begin with the raw amino-acid sequence, 536 residues long: Pre-mRNA-splicing factor SLU7-B (536 aa).

A disordered region spans residues 1–42 (MATASVAFKSREDHRKKLELEEARKAGLAPAEVDEDGKEINP). Positions 9–25 (KSREDHRKKLELEEARK) are enriched in basic and acidic residues. The segment at 96-109 (CINCGAMTHSSKAC) adopts a CCHC-type zinc-finger fold. Disordered stretches follow at residues 176 to 201 (LKKL…DLDD) and 488 to 507 (KEDL…YNVN). Residues 187–200 (NGDDATSDGEEDLD) are compositionally biased toward acidic residues. Ser-193 carries the phosphoserine modification. Residues 486–493 (LKKEDLSR) carry the Nuclear localization signal motif. Basic and acidic residues predominate over residues 488-501 (KEDLSRREEKDERK).

It belongs to the SLU7 family. In terms of assembly, interacts with PHYB in photobodies under red light.

It localises to the nucleus. Participates in the second catalytic step of pre-mRNA splicing, when the free hydroxyl group of exon I attacks the 3'-splice site to generate spliced mRNA and the excised lariat intron. Splicing factor acting as a negative regulator of seedling photomorphogenesis by antagonizing PHYB signaling to promote light-induced hypocotyl elongation. Prevents the accumulation of functionally spliced RVE8a form, a circadian clock regulator mediating the transcriptional activation of clock genes containing evening elements (EE), but promotes PIF4 expression to fine-tune hypocotyl elongation in the light. Together with SMP1, involved in the timing of cell cycle arrest during leaf development, in a STRUWWELPETER (SWP) dependent manner; promotes cell proliferation in developing organs. This chain is Pre-mRNA-splicing factor SLU7-B, found in Arabidopsis thaliana (Mouse-ear cress).